The primary structure comprises 301 residues: Sulfate adenylyltransferase subunit 2 (301 aa).

The protein belongs to the PAPS reductase family. CysD subfamily. As to quaternary structure, heterodimer composed of CysD, the smaller subunit, and CysN.

It carries out the reaction sulfate + ATP + H(+) = adenosine 5'-phosphosulfate + diphosphate. Its pathway is sulfur metabolism; hydrogen sulfide biosynthesis; sulfite from sulfate: step 1/3. Its function is as follows. With CysN forms the ATP sulfurylase (ATPS) that catalyzes the adenylation of sulfate producing adenosine 5'-phosphosulfate (APS) and diphosphate, the first enzymatic step in sulfur assimilation pathway. APS synthesis involves the formation of a high-energy phosphoric-sulfuric acid anhydride bond driven by GTP hydrolysis by CysN coupled to ATP hydrolysis by CysD. This is Sulfate adenylyltransferase subunit 2 from Shewanella woodyi (strain ATCC 51908 / MS32).